The sequence spans 275 residues: Large ribosomal subunit protein uL2 (275 aa).

Positions 224–257 (AMNPIDHPHGGGEGRTAAGRDPVSPWGTPTKGFR) are disordered.

The protein belongs to the universal ribosomal protein uL2 family. In terms of assembly, part of the 50S ribosomal subunit. Forms a bridge to the 30S subunit in the 70S ribosome.

Its function is as follows. One of the primary rRNA binding proteins. Required for association of the 30S and 50S subunits to form the 70S ribosome, for tRNA binding and peptide bond formation. It has been suggested to have peptidyltransferase activity; this is somewhat controversial. Makes several contacts with the 16S rRNA in the 70S ribosome. This is Large ribosomal subunit protein uL2 from Burkholderia mallei (strain NCTC 10247).